Here is a 325-residue protein sequence, read N- to C-terminus: Casein kinase I isoform alpha (325 aa).

Alanine 2 is subject to N-acetylalanine. Serine 4 is subject to Phosphoserine. At lysine 8 the chain carries N6-acetyllysine. The 269-residue stretch at 17–285 (YKLVRKIGSG…YLRQLFRILF (269 aa)) folds into the Protein kinase domain. ATP is bound by residues 23–31 (IGSGSFGDI) and lysine 46. Catalysis depends on aspartate 136, which acts as the Proton acceptor. Isoleucine 156 bears the Phosphoserine mark.

It belongs to the protein kinase superfamily. CK1 Ser/Thr protein kinase family. Casein kinase I subfamily. Interacts with the Axin complex. Interacts with TUT1, leading to TUT1 phosphorylation. Interacts with FAM83A, FAM83B, FAM83C, FAM83D, FAM83E, FAM83F, FAM83G and FAM83H (via DUF1669). Interaction with FAM83H recruits CSNK1A1 to keratin filaments. Post-translationally, phosphorylated by MTOR in response to mitogenic stimulation, leading to its activation.

The protein resides in the cytoplasm. It localises to the cytoskeleton. It is found in the microtubule organizing center. The protein localises to the centrosome. Its subcellular location is the chromosome. The protein resides in the centromere. It localises to the kinetochore. It is found in the nucleus speckle. The protein localises to the cilium basal body. Its subcellular location is the spindle. It catalyses the reaction L-seryl-[protein] + ATP = O-phospho-L-seryl-[protein] + ADP + H(+). It carries out the reaction L-threonyl-[protein] + ATP = O-phospho-L-threonyl-[protein] + ADP + H(+). Casein kinases are operationally defined by their preferential utilization of acidic proteins such as caseins as substrates. Can phosphorylate a large number of proteins. Participates in Wnt signaling. Phosphorylates CTNNB1 at 'Ser-45'. May phosphorylate PER1 and PER2. May play a role in segregating chromosomes during mitosis. May play a role in keratin cytoskeleton disassembly and thereby, it may regulate epithelial cell migration. Acts as a positive regulator of mTORC1 and mTORC2 signaling in response to nutrients by mediating phosphorylation of DEPTOR inhibitor. Acts as an inhibitor of NLRP3 inflammasome assembly by mediating phosphorylation of NLRP3. The protein is Casein kinase I isoform alpha (Csnk1a1) of Rattus norvegicus (Rat).